Reading from the N-terminus, the 220-residue chain is Zinc finger protein 36 (220 aa).

Residues 73–95 (FRCTVCGKAFASYQALGGHKSSH) form a C2H2-type 1 zinc finger. The disordered stretch occupies residues 90-134 (GHKSSHRKPPSPGDHYGAAAAAQQLASAGDSKEDSASSAAGSTGP). The span at 107-117 (AAAAAQQLASA) shows a compositional bias: low complexity. The segment at 135 to 157 (HRCTICRRSFATGQALGGHKRCH) adopts a C2H2-type 2 zinc-finger fold.

Its function is as follows. Probable transcription factor involved in abscisic acid (ABA) signaling. Required for the regulation of the cross-talk between NADPH oxidase, hydrogen peroxide and MAP kinase in ABA signaling. Regulates the expression of the NADPH oxidase genes RBOHB and RBOHE, and the MAPK genes MPK1, MPK4, MPK5, MPK7 and MPK14. Regulates ABA-induced hydrogen peroxide production and antioxidant defense. Required for tolerance to water stress and oxidative stress. This is Zinc finger protein 36 from Oryza sativa subsp. japonica (Rice).